A 1253-amino-acid chain; its full sequence is Cytoplasmic FMR1-interacting protein 1 (1253 aa).

Residue serine 583 is modified to Phosphoserine. Phosphothreonine is present on threonine 1234.

The protein belongs to the CYFIP family. As to quaternary structure, component of the WAVE1 complex composed of ABI2, CYFIP1 or CYFIP2, BRK1, NCKAP1 and WASF1/WAVE1. Within the complex, a heterodimer containing NCKAP1 and CYFIP1 interacts with a heterotrimer formed by WAVE1, ABI2 and BRK1. Component of the CYFIP1-EIF4E-FMR1 complex which is composed of CYFIP, EIF4E and FMR1. Interacts with FMR1 but does not bind to related proteins FXR1 or FXR2. Interaction with EIF4E stimulates FMR1 binding. Component of the WAVE2 complex composed of ABI1, CYFIP1/SRA1, NCKAP1/NAP1 (NCKAP1l/HEM1 in hematopoietic cells) and WASF2/WAVE2. Interacts with the active GTP-bound form of RAC1. Interacts through its C-terminus with the C-terminus of DPYSL2/CRMP2 which is necessary for DPYSL2-induced axon outgrowth. Interacts with NYAP1, NYAP2 and MYO16. Interacts with TMEM108 (via N-terminus); the interaction associates TMEM108 with the WAVE1 complex.

It localises to the cytoplasm. The protein localises to the perinuclear region. The protein resides in the cell projection. It is found in the lamellipodium. Its subcellular location is the ruffle. It localises to the synapse. The protein localises to the synaptosome. Functionally, component of the CYFIP1-EIF4E-FMR1 complex which binds to the mRNA cap and mediates translational repression. In the CYFIP1-EIF4E-FMR1 complex this subunit is an adapter between EIF4E and FMR1. Promotes the translation repression activity of FMR1 in brain probably by mediating its association with EIF4E and mRNA. Regulates formation of membrane ruffles and lamellipodia. Plays a role in axon outgrowth. Binds to F-actin but not to RNA. Part of the WAVE complex that regulates actin filament reorganization via its interaction with the Arp2/3 complex. Actin remodeling activity is regulated by RAC1. Regulator of epithelial morphogenesis. As component of the WAVE1 complex, required for BDNF-NTRK2 endocytic trafficking and signaling from early endosomes. May act as an invasion suppressor in cancers. This is Cytoplasmic FMR1-interacting protein 1 from Homo sapiens (Human).